A 1199-amino-acid chain; its full sequence is Tubulin monoglutamylase TTLL4 (1199 aa).

Positions 1 to 25 (MASAGTQHYSIGLRQKNSFKQSGPS) are enriched in polar residues. Disordered stretches follow at residues 1-43 (MASA…RVWP), 472-517 (IQLG…ELVD), and 525-544 (RDEN…SAVS). Positions 477–495 (SEKERPEEARELDSSDRDI) are enriched in basic and acidic residues. Positions 506–517 (AETEDTEEELVD) are enriched in acidic residues. Residues 604–947 (RKLLRWKMST…VLPNAEDIIS (344 aa)) form the TTL domain. The residue at position 691 (serine 691) is a Phosphoserine. ATP is bound by residues lysine 721, 727-728 (RG), 749-752 (QRYL), and 762-764 (KFD). A protein is bound at residue arginine 727. Residue arginine 788 coordinates L-glutamate. 809 to 810 (TN) serves as a coordination point for ATP. The L-glutamate site is built by tyrosine 811, serine 812, and lysine 833. Mg(2+) is bound by residues aspartate 893, glutamate 906, and asparagine 908. A c-MTBD region region spans residues 918 to 1029 (PLDISIKGQM…RGQFERIFPS (112 aa)). Lysine 924 is a binding site for L-glutamate. The segment covering 1130 to 1141 (GTTPKSKKTQAG) has biased composition (polar residues). Residues 1130–1199 (GTTPKSKKTQ…ISDSLLAVSP (70 aa)) form a disordered region. The segment covering 1151-1160 (SSKDSEDTSK) has biased composition (basic and acidic residues). Positions 1164–1192 (LSTQTLPVIKCSGQTSRLSASSTFQSISD) are enriched in polar residues.

The protein belongs to the tubulin--tyrosine ligase family. The cofactor is Mg(2+).

Its subcellular location is the cytoplasm. The protein localises to the cell projection. It localises to the cilium. It is found in the cytoskeleton. The protein resides in the cilium basal body. It catalyses the reaction L-glutamyl-[protein] + L-glutamate + ATP = gamma-L-glutamyl-L-glutamyl-[protein] + ADP + phosphate + H(+). Functionally, monoglutamylase which modifies both tubulin and non-tubulin proteins, adding a single glutamate on the gamma-carboxyl group of specific glutamate residues of target proteins. Involved in the side-chain initiation step of the polyglutamylation reaction but not in the elongation step. Preferentially modifies beta-tail tubulin over the alpha-tubulin. Monoglutamylates nucleosome assembly proteins NAP1L1 and NAP1L4. Monoglutamylates nucleotidyltransferase CGAS, leading to inhibition of CGAS catalytic activity, thereby preventing antiviral defense function. Involved in KLF4 glutamylation which impedes its ubiquitination, thereby leading to somatic cell reprogramming, pluripotency maintenance and embryogenesis. This is Tubulin monoglutamylase TTLL4 from Homo sapiens (Human).